Consider the following 296-residue polypeptide: Ribosomal RNA small subunit methyltransferase J (296 aa).

Position 205 (aspartate 205) interacts with S-adenosyl-L-methionine.

Belongs to the methyltransferase superfamily. RsmJ family.

Its subcellular location is the cytoplasm. It carries out the reaction guanosine(1516) in 16S rRNA + S-adenosyl-L-methionine = N(2)-methylguanosine(1516) in 16S rRNA + S-adenosyl-L-homocysteine + H(+). In terms of biological role, specifically methylates the guanosine in position 1516 of 16S rRNA. The polypeptide is Ribosomal RNA small subunit methyltransferase J (Psychrobacter arcticus (strain DSM 17307 / VKM B-2377 / 273-4)).